The chain runs to 356 residues: Glutenin, low molecular weight subunit (356 aa).

A signal peptide spans 1–19; the sequence is MKTFLVFALLALAAASAVA. Positions 20 to 179 are disordered; it reads QISQQQQAPP…LQQQRPPFSR (160 aa).

This sequence belongs to the gliadin/glutenin family. As to quaternary structure, disulfide-bridge linked aggregates.

Glutenins are high-molecular weight seed storage proteins of wheat endosperm. Thought to be responsible for the visco-elastic property of wheat dough. In Triticum aestivum (Wheat), this protein is Glutenin, low molecular weight subunit.